We begin with the raw amino-acid sequence, 67 residues long: Large ribosomal subunit protein bL35 (67 aa).

A disordered region spans residues 1–41 (MPKMKTHRGAAKRFKKTGTGKLKRSHAYTSHMFRHKSQKQK).

It belongs to the bacterial ribosomal protein bL35 family.

The protein is Large ribosomal subunit protein bL35 of Shouchella clausii (strain KSM-K16) (Alkalihalobacillus clausii).